The sequence spans 492 residues: Diacylglycerol kinase 7 (492 aa).

A DAGKc domain is found at 90 to 248 (APHAPMVVFI…SWKIVVSMPS (159 aa)).

It belongs to the eukaryotic diacylglycerol kinase family. Monomer. In terms of tissue distribution, highly expressed in flowers, and at low levels in roots, stems and leaves.

The catalysed reaction is a 1,2-diacyl-sn-glycerol + ATP = a 1,2-diacyl-sn-glycero-3-phosphate + ADP + H(+). Its function is as follows. Phosphorylates the second messenger diacylglycerol (DAG) to generate phosphatidic acid (PA), another important signaling molecule. PA is required for plant development and responses to abiotic stress and pathogen attack. May be involved in the accumulation of PA during cold stress xhibits high specificity for 1,2-dioleoyl-sn-glycerol (1,2-DOG), 1-palmitoyl, 2-oleoyl-sn-glycerol (1,2 POG), 1-stearoyl, 2-linoleoyl-sn-glycerol (1,2-SLG) and 1-oleoyl, 2-palmitoyl-sn-glycerol (1,2-OPG). The protein is Diacylglycerol kinase 7 (DGK7) of Arabidopsis thaliana (Mouse-ear cress).